The sequence spans 70 residues: Melittin (70 aa).

Residues 1-21 (MKFLVNVALVFMVVYISYIYA) form the signal peptide. The propeptide at 22 to 43 (APEPEPAPEPEAEADAEADPEA) is removed by a dipeptidylpeptidase. Gly-44 carries the N-formylglycine; partial modification. Gln-69 is modified (glutamine amide).

Belongs to the melittin family. Monomer (in solution and for integration into membranes), homotetramer (in solution and potentially as a toroidal pore in membranes), and potenially homomultimer (as a toroidal pore in membranes). As to expression, expressed by the venom gland.

It is found in the secreted. It localises to the target cell membrane. Melittin: Main toxin of bee venom with strong antimicrobial activity and hemolytic activity. It has enhancing effects on bee venom phospholipase A2 activity. This amphipathic toxin binds to negatively charged membrane surface and forms pore by inserting into lipid bilayers inducing the leakage of ions and molecules and the enhancement of permeability that ultimately leads to cell lysis. It acts as a voltage-gated pore with higher selectivity for anions over cations. The ion conductance has been shown to be voltage-dependent. Self-association of melittin in membranes is promoted by high ionic strength, but not by the presence of negatively charged lipids. In vivo, intradermal injection into healthy human volunteers produce sharp pain sensation and an inflammatory response. It produces pain by activating primary nociceptor cells directly and indirectly due to its ability to activate plasma membrane phospholipase A2 and its pore-forming activity. In the context of inflammation and cancer tests, is highly cytotoxic to normal cells, highly induces calcium signaling and almost completely prevents cAMP production. In addition, prevents LPS-induced nitric oxid (NO) synthesis but does not affect the IP3 signaling and pro-inflammatory activation of endothelial cells. Also shows significant antiproliferative activity on the breast cancer cell line MDA-MB-231. Functionally, melittin-S: 1.4-fold less hemolytic and adopts a less organized secondary structure than melittin. In terms of biological role, melittin-2: Has strong hemolytic activity. The sequence is that of Melittin (MELT) from Apis mellifera (Honeybee).